The chain runs to 169 residues: Lipoprotein signal peptidase (169 aa).

The next 4 helical transmembrane spans lie at 15–35 (WLWL…VVMN), 47–67 (ILPF…SFLS), 75–95 (WLFT…MSKL), and 107–127 (AMII…GFVV). Catalysis depends on residues D128 and D146. Residues 141 to 161 (AFNLADMAICLGAAMIILDGF) traverse the membrane as a helical segment.

This sequence belongs to the peptidase A8 family.

It is found in the cell inner membrane. The catalysed reaction is Release of signal peptides from bacterial membrane prolipoproteins. Hydrolyzes -Xaa-Yaa-Zaa-|-(S,diacylglyceryl)Cys-, in which Xaa is hydrophobic (preferably Leu), and Yaa (Ala or Ser) and Zaa (Gly or Ala) have small, neutral side chains.. It functions in the pathway protein modification; lipoprotein biosynthesis (signal peptide cleavage). In terms of biological role, this protein specifically catalyzes the removal of signal peptides from prolipoproteins. The protein is Lipoprotein signal peptidase of Vibrio parahaemolyticus serotype O3:K6 (strain RIMD 2210633).